Here is a 356-residue protein sequence, read N- to C-terminus: GATA zinc finger domain-containing protein 17 (356 aa).

Residues 91 to 119 (LKEFDALEASLNAELECLELQYSSDTSEL) are a coiled coil. Residues 158 to 188 (TASTSTSTPTNTTTTTTTTSNSLTKNNNSAL) are compositionally biased toward low complexity. The tract at residues 158 to 294 (TASTSTSTPT…DITEESKVKE (137 aa)) is disordered. The span at 206–228 (SSDDEEDDQKDDQDKDDSDEDNV) shows a compositional bias: acidic residues. Residues 260-284 (TAITTTTTPITTTDSNIIGTTTTTD) are compositionally biased toward low complexity. A GATA-type zinc finger spans residues 304–331 (CYVCKVTETPYWRRGTDNGVVVDLCNEC).

This is GATA zinc finger domain-containing protein 17 (gtaQ) from Dictyostelium discoideum (Social amoeba).